Consider the following 346-residue polypeptide: MQQEKELVKQKAKELLLDLLSIYTPSKNETNATKFFEKISNEFNLKLEILPDSNSFILGEGEILLASHVDTVPGYIEPKIENEVIYGRGAVDAKGPLISMIIAAWLLNEKGIKVMVSGLADEESTSIGAKELTLKNFNFKHIIVGEPSNGTDIVVEYRGSIQLDIMCKSTPEHSSSAKSNLIVDISKKIIEVYKQPENYDKPSIVPTIIRAGESYNVTPAKLYLHFDVRYAINNKRDDLINEIKDKFQECGLKIVDETPPVKVSINNPVVKSLTRALLKQNIKPRLVRKAGTSDMNILQKITTSIATYGPGNSMLEHTNQEKITLDEIYIGVKTYMLAIEELWQKS.

Residue His68 participates in Zn(2+) binding. Residue Asp70 is part of the active site. Asp92 serves as a coordination point for Zn(2+). Glu122 acts as the Proton acceptor in catalysis. Residues Glu123, Glu146, and His317 each contribute to the Zn(2+) site.

The protein belongs to the peptidase M20A family. LysK subfamily. Zn(2+) is required as a cofactor. Requires Co(2+) as cofactor.

The protein localises to the cytoplasm. The enzyme catalyses [amino-group carrier protein]-C-terminal-gamma-(L-lysyl)-L-glutamate + H2O = [amino-group carrier protein]-C-terminal-L-glutamate + L-lysine. It carries out the reaction [amino-group carrier protein]-C-terminal-gamma-(L-ornithyl)-L-glutamate + H2O = [amino-group carrier protein]-C-terminal-L-glutamate + L-ornithine. Its pathway is amino-acid biosynthesis; L-lysine biosynthesis via AAA pathway; L-lysine from L-alpha-aminoadipate (Thermus route): step 5/5. It functions in the pathway amino-acid biosynthesis; L-arginine biosynthesis. In terms of biological role, catalyzes the release of L-lysine from [LysW]-gamma-L-lysine and the release of L-ornithine from [LysW]-L-ornithine. The protein is [LysW]-lysine/[LysW]-ornithine hydrolase of Saccharolobus islandicus (strain M.16.4 / Kamchatka #3) (Sulfolobus islandicus).